The following is a 243-amino-acid chain: Pyridoxine 5'-phosphate synthase (243 aa).

N9 provides a ligand contact to 3-amino-2-oxopropyl phosphate. Position 11-12 (D11–H12) interacts with 1-deoxy-D-xylulose 5-phosphate. R20 is a binding site for 3-amino-2-oxopropyl phosphate. H45 serves as the catalytic Proton acceptor. 1-deoxy-D-xylulose 5-phosphate is bound by residues R47 and H52. The Proton acceptor role is filled by E72. T102 contacts 1-deoxy-D-xylulose 5-phosphate. The active-site Proton donor is H193. 3-amino-2-oxopropyl phosphate contacts are provided by residues G194 and G215–H216.

The protein belongs to the PNP synthase family. In terms of assembly, homooctamer; tetramer of dimers.

The protein resides in the cytoplasm. It catalyses the reaction 3-amino-2-oxopropyl phosphate + 1-deoxy-D-xylulose 5-phosphate = pyridoxine 5'-phosphate + phosphate + 2 H2O + H(+). It functions in the pathway cofactor biosynthesis; pyridoxine 5'-phosphate biosynthesis; pyridoxine 5'-phosphate from D-erythrose 4-phosphate: step 5/5. In terms of biological role, catalyzes the complicated ring closure reaction between the two acyclic compounds 1-deoxy-D-xylulose-5-phosphate (DXP) and 3-amino-2-oxopropyl phosphate (1-amino-acetone-3-phosphate or AAP) to form pyridoxine 5'-phosphate (PNP) and inorganic phosphate. This Aliivibrio fischeri (strain ATCC 700601 / ES114) (Vibrio fischeri) protein is Pyridoxine 5'-phosphate synthase.